The following is a 236-amino-acid chain: Small ribosomal subunit protein uS3 (236 aa).

The 69-residue stretch at isoleucine 39–lysine 107 folds into the KH type-2 domain. Residues glutamine 213–glycine 229 are compositionally biased toward basic and acidic residues. The interval glutamine 213 to glutamine 236 is disordered.

The protein belongs to the universal ribosomal protein uS3 family. As to quaternary structure, part of the 30S ribosomal subunit. Forms a tight complex with proteins S10 and S14.

Functionally, binds the lower part of the 30S subunit head. Binds mRNA in the 70S ribosome, positioning it for translation. The protein is Small ribosomal subunit protein uS3 of Wolinella succinogenes (strain ATCC 29543 / DSM 1740 / CCUG 13145 / JCM 31913 / LMG 7466 / NCTC 11488 / FDC 602W) (Vibrio succinogenes).